The chain runs to 1009 residues: Anillin-like protein 2 (1009 aa).

3 disordered regions span residues 1–29 (MYRRENINFSHPPQLKSPPPMSSPLDSNR), 272–295 (FGQEESVRASPMSRRNRRGTQTIV), and 539–558 (GTGYSASSSGPQFTRSPTLV). A compositionally biased stretch (polar residues) spans 542–557 (YSASSSGPQFTRSPTL). The stretch at 626-657 (SAADKINDSKRQISKLIETIEKTRKHIQLAEI) forms a coiled coil. The region spanning 892 to 1005 (DVEYRGFLYL…WLNAINDTLF (114 aa)) is the PH domain.

Localizes to the surface of the rachis.

Its function is as follows. Required to maintain the structure of the rachis, the central cytoplasmic core of the syncytial adult gonad. Failure to maintain the rachis leads to premature dissociation of oocytes and thereby impedes oogenesis. The chain is Anillin-like protein 2 (ani-2) from Caenorhabditis elegans.